Reading from the N-terminus, the 277-residue chain is Thymidylate synthase (277 aa).

Arg-21 serves as a coordination point for dUMP. Residue His-51 coordinates (6R)-5,10-methylene-5,6,7,8-tetrahydrofolate. Residue Arg-126–Arg-127 coordinates dUMP. The active-site Nucleophile is Cys-159. DUMP is bound by residues Arg-179 to Asp-182, Asn-190, and His-220 to Tyr-222. Residue Asp-182 participates in (6R)-5,10-methylene-5,6,7,8-tetrahydrofolate binding. Ser-276 is a (6R)-5,10-methylene-5,6,7,8-tetrahydrofolate binding site.

The protein belongs to the thymidylate synthase family. Bacterial-type ThyA subfamily. Homodimer.

It localises to the cytoplasm. The catalysed reaction is dUMP + (6R)-5,10-methylene-5,6,7,8-tetrahydrofolate = 7,8-dihydrofolate + dTMP. It participates in pyrimidine metabolism; dTTP biosynthesis. Catalyzes the reductive methylation of 2'-deoxyuridine-5'-monophosphate (dUMP) to 2'-deoxythymidine-5'-monophosphate (dTMP) while utilizing 5,10-methylenetetrahydrofolate (mTHF) as the methyl donor and reductant in the reaction, yielding dihydrofolate (DHF) as a by-product. This enzymatic reaction provides an intracellular de novo source of dTMP, an essential precursor for DNA biosynthesis. The chain is Thymidylate synthase from Saccharophagus degradans (strain 2-40 / ATCC 43961 / DSM 17024).